We begin with the raw amino-acid sequence, 244 residues long: MPKKYGVKEKDQVVAHILNLLLTGKLRSGDRVDRNEIAHGLGVSRVPIQEALVQLEHDGIVSTRYHRGAFIERFDVATILEHHELDGLLNGIASARAAANPTPRILGQLDAVMRSLRNSKESRAFAECVWEYRRTVNDEYAGPRLHATIRASQNLIPRVFWMTYQNSRDDVLPFYEEENAAIHRREPEAARAACIGRSELMAQTMLAELFRRRVLVPPEGACPGPFGAPIPGFARSYQPSSPVP.

An HTH gntR-type domain is found at 7–74; the sequence is VKEKDQVVAH…YHRGAFIERF (68 aa). Residues 34-53 constitute a DNA-binding region (H-T-H motif); sequence RNEIAHGLGVSRVPIQEALV.

This is an uncharacterized protein from Mycobacterium tuberculosis (strain CDC 1551 / Oshkosh).